The following is a 216-amino-acid chain: ATP-dependent Clp protease proteolytic subunit (216 aa).

The Nucleophile role is filled by Ser-120. Residue His-145 is part of the active site.

The protein belongs to the peptidase S14 family. In terms of assembly, fourteen ClpP subunits assemble into 2 heptameric rings which stack back to back to give a disk-like structure with a central cavity, resembling the structure of eukaryotic proteasomes.

Its subcellular location is the cytoplasm. The enzyme catalyses Hydrolysis of proteins to small peptides in the presence of ATP and magnesium. alpha-casein is the usual test substrate. In the absence of ATP, only oligopeptides shorter than five residues are hydrolyzed (such as succinyl-Leu-Tyr-|-NHMec, and Leu-Tyr-Leu-|-Tyr-Trp, in which cleavage of the -Tyr-|-Leu- and -Tyr-|-Trp bonds also occurs).. In terms of biological role, cleaves peptides in various proteins in a process that requires ATP hydrolysis. Has a chymotrypsin-like activity. Plays a major role in the degradation of misfolded proteins. This is ATP-dependent Clp protease proteolytic subunit from Cupriavidus necator (strain ATCC 17699 / DSM 428 / KCTC 22496 / NCIMB 10442 / H16 / Stanier 337) (Ralstonia eutropha).